Reading from the N-terminus, the 337-residue chain is Phosphatidylglycerophosphate phosphatase PTPMT1 (337 aa).

The tract at residues Met1 to Asp20 is disordered. Substrate-binding residues include Tyr55 and Asp133. Positions Trp73–Leu220 constitute a Tyrosine-protein phosphatase domain. Cys164 functions as the Phosphocysteine intermediate in the catalytic mechanism. A Glucan phosphatase signature motif CXAGXGR motif is present at residues Cys164–Arg170. Lys165 to Arg170 is a binding site for substrate.

The protein belongs to the protein-tyrosine phosphatase family. Non-receptor class dual specificity subfamily. As to expression, expressed in stems, roots, flowers, mature seeds and leaves.

The enzyme catalyses O-phospho-L-seryl-[protein] + H2O = L-seryl-[protein] + phosphate. It carries out the reaction O-phospho-L-threonyl-[protein] + H2O = L-threonyl-[protein] + phosphate. It catalyses the reaction O-phospho-L-tyrosyl-[protein] + H2O = L-tyrosyl-[protein] + phosphate. The catalysed reaction is a 1,2-diacyl-sn-glycero-3-phospho-(1'-sn-glycero-3'-phosphate) + H2O = a 1,2-diacyl-sn-glycero-3-phospho-(1'-sn-glycerol) + phosphate. It functions in the pathway phospholipid metabolism; phosphatidylglycerol biosynthesis; phosphatidylglycerol from CDP-diacylglycerol: step 2/2. Functionally, exhibits phosphatidylglycerophosphate phosphatase activity. Involved in root growth and columella cells organization. May possess protein phosphatase activity. This chain is Phosphatidylglycerophosphate phosphatase PTPMT1, found in Arabidopsis thaliana (Mouse-ear cress).